We begin with the raw amino-acid sequence, 187 residues long: Putative glutathione-dependent formaldehyde-activating enzyme (187 aa).

Residues 20–166 enclose the CENP-V/GFA domain; the sequence is FPGGKLYCHC…FESVGLKTYD (147 aa). Cys27, Cys29, Cys48, Cys50, Cys53, Cys95, and Cys98 together coordinate Zn(2+).

This sequence belongs to the Gfa family. Zn(2+) serves as cofactor.

It catalyses the reaction S-(hydroxymethyl)glutathione = glutathione + formaldehyde. It participates in one-carbon metabolism; formaldehyde degradation; formate from formaldehyde (glutathione route): step 1/3. Catalyzes the condensation of formaldehyde and glutathione to S-hydroxymethylglutathione. The protein is Putative glutathione-dependent formaldehyde-activating enzyme of Talaromyces marneffei (strain ATCC 18224 / CBS 334.59 / QM 7333) (Penicillium marneffei).